Here is a 1074-residue protein sequence, read N- to C-terminus: DNA primase (1074 aa).

The CHC2-type zinc finger occupies 1012 to 1052; that stretch reads CVRFKHARARRASARSYLALNVDAHGRLCVCVIQQCFAAKC.

It belongs to the herpesviridae DNA primase family. As to quaternary structure, associates with the helicase and the primase-associated factor to form the helicase-primase factor.

The protein resides in the host nucleus. Essential component of the helicase/primase complex. Unwinds the DNA at the replication forks and generates single-stranded DNA for both leading and lagging strand synthesis. The primase initiates primer synthesis and thereby produces large amount of short RNA primers on the lagging strand that the polymerase elongates using dNTPs. The protein is DNA primase (MDV066) of Gallus gallus (Chicken).